Here is a 434-residue protein sequence, read N- to C-terminus: Methylenetetrahydrofolate--tRNA-(uracil-5-)-methyltransferase TrmFO (434 aa).

An FAD-binding site is contributed by 9 to 14 (GAGLAG).

This sequence belongs to the MnmG family. TrmFO subfamily. The cofactor is FAD.

It localises to the cytoplasm. The catalysed reaction is uridine(54) in tRNA + (6R)-5,10-methylene-5,6,7,8-tetrahydrofolate + NADH + H(+) = 5-methyluridine(54) in tRNA + (6S)-5,6,7,8-tetrahydrofolate + NAD(+). The enzyme catalyses uridine(54) in tRNA + (6R)-5,10-methylene-5,6,7,8-tetrahydrofolate + NADPH + H(+) = 5-methyluridine(54) in tRNA + (6S)-5,6,7,8-tetrahydrofolate + NADP(+). In terms of biological role, catalyzes the folate-dependent formation of 5-methyl-uridine at position 54 (M-5-U54) in all tRNAs. The sequence is that of Methylenetetrahydrofolate--tRNA-(uracil-5-)-methyltransferase TrmFO from Listeria innocua serovar 6a (strain ATCC BAA-680 / CLIP 11262).